The following is a 313-amino-acid chain: Lactamase-like protein nscB (313 aa).

His97, His99, Asp101, and His102 together coordinate Zn(2+). The Proton donor/acceptor role is filled by Asp101.

The protein belongs to the metallo-beta-lactamase superfamily. It depends on Zn(2+) as a cofactor.

It functions in the pathway secondary metabolite biosynthesis. In terms of biological role, lactamase-like protein; part of the gene cluster that mediates the biosynthesis of neosartoricin B, a prenylated anthracenone that probably exhibits T-cell antiproliferative activity, suggestive of a physiological role as an immunosuppressive agent. The non-reducing polyketide synthase nscA probably synthesizes and cyclizes the decaketide backbone. The hydrolase nscB then mediates the product release through hydrolysis followed by spontaneous decarboxylation. The prenyltransferase nscD catalyzes the addition of the dimethylallyl group to the aromatic C5. The FAD-dependent monooxygenase nscC is then responsible for the stereospecific hydroxylation at C2. Neosartoricin B can be converted into two additional compounds neosartoricins C and D. Neosartoricin C is a spirocyclic compound that is cyclized through the attack of C3 hydroxyl on C14, followed by dehydration. On the other hand, neosartoricin D is a further cyclized compound in which attack of C2 on C14 in neosartoricin C results in the formation of the acetal-containing dioxabicyclo-octanone ring. Both of these compounds are novel and possibly represent related metabolites of the gene cluster. The chain is Lactamase-like protein nscB from Arthroderma gypseum (strain ATCC MYA-4604 / CBS 118893) (Microsporum gypseum).